A 350-amino-acid polypeptide reads, in one-letter code: MPSDNTFVRVRQQQRDPLHVNSPVSGGNISGVQGSGSRSGSTVPPSPPTPTTQPSVNHYDVQVDRLNNLTLEELLDSPDIKGYNRSMQVYNWDRSINKRVRVEFEAKLKSRMSNQVSRWKGNWKEKGDEAKPKWIDPDVWKGLVQFWQDPKSEKKSNNSRNARYHDLDGKDIYKHRSGQTSYKARARKRCEKTGETTPDFLELLDETHRKADGTFIDGKSKEIYKQVTSRIEEEESHMCSMDNPESTGSGGLSVHSKNKIFTEKLAAAEACIQSQAERINSFDILFDYLAEKDPALAAILRHGSSTQIGQANPNEPPVSAAPEPQVANEETAAAALANLATGSSPPSTVF.

2 disordered regions span residues 1–57 and 307–328; these read MPSD…PSVN and QIGQ…QVAN. Residues 30–43 are compositionally biased toward low complexity; the sequence is SGVQGSGSRSGSTV.

Belongs to the transposase 24 family.

The protein is Probable transposase-like protein At4g04430 of Arabidopsis thaliana (Mouse-ear cress).